The sequence spans 53 residues: Large ribosomal subunit protein bL32 (53 aa).

The tract at residues 1 to 27 (MAVQQNKKSRSRRDMRRSHDALTTAAV) is disordered. Over residues 7-16 (KKSRSRRDMR) the composition is skewed to basic residues.

The protein belongs to the bacterial ribosomal protein bL32 family.

This chain is Large ribosomal subunit protein bL32, found in Glaesserella parasuis serovar 5 (strain SH0165) (Haemophilus parasuis).